Consider the following 404-residue polypeptide: 2,3-bisphosphoglycerate-independent phosphoglycerate mutase (404 aa).

Positions 155–183 (LSDMIGDSDPHREGLPPEKIRPTDPSGDR) are disordered. The segment covering 162-183 (SDPHREGLPPEKIRPTDPSGDR) has biased composition (basic and acidic residues).

It belongs to the BPG-independent phosphoglycerate mutase family. A-PGAM subfamily.

The catalysed reaction is (2R)-2-phosphoglycerate = (2R)-3-phosphoglycerate. Its pathway is carbohydrate degradation; glycolysis; pyruvate from D-glyceraldehyde 3-phosphate: step 3/5. Functionally, catalyzes the interconversion of 2-phosphoglycerate and 3-phosphoglycerate. In Thermoplasma acidophilum (strain ATCC 25905 / DSM 1728 / JCM 9062 / NBRC 15155 / AMRC-C165), this protein is 2,3-bisphosphoglycerate-independent phosphoglycerate mutase.